The following is a 246-amino-acid chain: MYQIEFKEEAFLPRERLVEVGAERLSNQELLAIFIRTGTKKEPVSILSNKLLNRLESLAALRELSIEELQSLTGIGRVKAIEIKAMIELGKRINQSELLLNERILGSEKLGRKMIHEIGHKKQEHLVALYLNTQNQIISQKTIFIGSVNRSIAEPREILHYAVKCMATSIIIVHNHPSGSVQPSRNDLLFTENLKESCEKLGLVLLDHLIVGNKDYYSFREESDVILKFIDNIVEEVFFNLTFTVE.

Residues 103-225 (RILGSEKLGR…YYSFREESDV (123 aa)) enclose the MPN domain. Zn(2+) is bound by residues His174, His176, and Asp187. A JAMM motif motif is present at residues 174-187 (HNHPSGSVQPSRND).

The protein belongs to the UPF0758 family.

The sequence is that of UPF0758 protein SSU98_1084 from Streptococcus suis (strain 98HAH33).